The primary structure comprises 292 residues: Homoserine kinase (292 aa).

Position 81 to 91 (81 to 91 (RPKSGLGSSGA)) interacts with ATP.

Belongs to the GHMP kinase family. Homoserine kinase subfamily.

Its subcellular location is the cytoplasm. The catalysed reaction is L-homoserine + ATP = O-phospho-L-homoserine + ADP + H(+). Its pathway is amino-acid biosynthesis; L-threonine biosynthesis; L-threonine from L-aspartate: step 4/5. Its function is as follows. Catalyzes the ATP-dependent phosphorylation of L-homoserine to L-homoserine phosphate. In Pyrococcus furiosus (strain ATCC 43587 / DSM 3638 / JCM 8422 / Vc1), this protein is Homoserine kinase.